The primary structure comprises 621 residues: E3 SUMO-protein ligase PIAS2 (621 aa).

Positions 11–45 (VSSFRVSELQVLLGFAGRNKSGRKHDLLMRALHLL) constitute an SAP domain. An LXXLL motif motif is present at residues 19-23 (LQVLL). Glycyl lysine isopeptide (Lys-Gly) (interchain with G-Cter in SUMO2) cross-links involve residues lysine 46 and lysine 249. The region spanning 134 to 299 (QPSPPIPPVH…SMSVYLVRQL (166 aa)) is the PINIT domain. The SP-RING-type zinc-finger motif lies at 331 to 412 (PDSEIATTSL…FMEILNDCSD (82 aa)). Positions 362, 364, 385, and 388 each coordinate Zn(2+). Residues lysine 430, lysine 435, lysine 443, and lysine 452 each participate in a glycyl lysine isopeptide (Lys-Gly) (interchain with G-Cter in SUMO2) cross-link. The segment at 467 to 473 (IDVIDLT) is SUMO1-binding. 3 positions are modified to phosphoserine: serine 476, serine 477, and serine 478. The Nuclear localization signal motif lies at 484–492 (PPAKRKCIF). Lysine 489 is covalently cross-linked (Glycyl lysine isopeptide (Lys-Gly) (interchain with G-Cter in SUMO2)). Serine 499 bears the Phosphoserine mark. Lysine 502 is covalently cross-linked (Glycyl lysine isopeptide (Lys-Gly) (interchain with G-Cter in SUMO2)). Residues 577-610 (TASSTSVTTTSPHESSTHVSSSSSRSETGVITSS) are compositionally biased toward low complexity. The disordered stretch occupies residues 577 to 621 (TASSTSVTTTSPHESSTHVSSSSSRSETGVITSSGRNIPDIISLD).

It belongs to the PIAS family. As to quaternary structure, binds SUMO1 and UBE2I. Interacts with AXIN1, JUN, MDM2, PARK7, TP53 and TP73 isoform alpha, but not TP73 isoform beta. Interacts with STAT4 following IL12 and IFN-alpha stimulation of T-cells. Interacts also with GTF2I, GTF2IRD1, IKFZ1, DAB2 and MSX2, as well as with several steroid receptors, including ESR1, ESR2, NR3C1, PGR, AR, and with NCOA2. Sumoylation of a target protein seems to enhance the interaction. Binds to sumoylated ELK1. Interacts with PLAG1. Binds DNA, such as CDKN1A promoter, in a sequence-specific manner. Interacts with KLF8; the interaction results in SUMO ligation and repression of KLF8 transcriptional activity and of its cell cycle progression into G(1) phase. Interacts with IFIH1/MDA5. Interacts with PML. Interacts with PRDM1. Post-translationally, sumoylated.

It localises to the nucleus speckle. The protein resides in the nucleus. It is found in the PML body. The catalysed reaction is S-ubiquitinyl-[E2 ubiquitin-conjugating enzyme]-L-cysteine + [acceptor protein]-L-lysine = [E2 ubiquitin-conjugating enzyme]-L-cysteine + N(6)-ubiquitinyl-[acceptor protein]-L-lysine.. It functions in the pathway protein modification; protein sumoylation. In terms of biological role, functions as an E3-type small ubiquitin-like modifier (SUMO) ligase, stabilizing the interaction between UBE2I and the substrate, and as a SUMO-tethering factor. Plays a crucial role as a transcriptional coregulation in various cellular pathways, including the STAT pathway, the p53 pathway and the steroid hormone signaling pathway. The effects of this transcriptional coregulation, transactivation or silencing may vary depending upon the biological context and PIAS2 isoform studied. However, it seems to be mostly involved in gene silencing. Binds to sumoylated ELK1 and enhances its transcriptional activity by preventing recruitment of HDAC2 by ELK1, thus reversing SUMO-mediated repression of ELK1 transactivation activity. Isoform PIASx-beta, but not isoform PIASx-alpha, promotes MDM2 sumoylation. Isoform PIASx-alpha promotes PARK7 sumoylation. Isoform PIASx-beta promotes NCOA2 sumoylation more efficiently than isoform PIASx-alpha. Sumoylates PML at'Lys-65' and 'Lys-160'. This chain is E3 SUMO-protein ligase PIAS2 (Pias2), found in Mus musculus (Mouse).